Consider the following 31-residue polypeptide: MPRRRRASRRIRRRRRPRVSRRRRGGRRRRR.

The disordered stretch occupies residues 1 to 31; the sequence is MPRRRRASRRIRRRRRPRVSRRRRGGRRRRR.

Testis.

It is found in the nucleus. It localises to the chromosome. Functionally, protamines substitute for histones in the chromatin of sperm during the haploid phase of spermatogenesis. They compact sperm DNA into a highly condensed, stable and inactive complex. This Oncorhynchus mykiss (Rainbow trout) protein is Protamine PTP4.